The chain runs to 764 residues: Bifunctional type I diterpene synthase tndC (764 aa).

The interval 1 to 324 (MEYRYSTVVD…CPRYHPWSSY (324 aa)) is terpene cyclase. Positions 92 and 96 each coordinate Mg(2+). The DDXXD 1 motif lies at 92 to 96 (DDVTD). The NSE/DTE motif lies at 224 to 232 (NDLYSWQKE). Residues 325–761 (NERQLDWMKN…FQLRLILEML (437 aa)) form a prenyltransferase region. The tract at residues 377–403 (AVNGNGASHTSSIKGSTGGNGVTHSPV) is disordered. Residues 381–391 (NGASHTSSIKG) show a composition bias toward polar residues. Residues K484, R487, and H516 each contribute to the isopentenyl diphosphate site. Mg(2+) contacts are provided by D523 and D527. A DDXXD 2 motif is present at residues 523–527 (DDLED). A dimethylallyl diphosphate-binding site is contributed by R532. Position 533 (R533) interacts with isopentenyl diphosphate. The dimethylallyl diphosphate site is built by K610, T611, Q646, N653, K663, and K673.

This sequence in the N-terminal section; belongs to the terpene synthase family. The protein in the C-terminal section; belongs to the FPP/GGPP synthase family.

It carries out the reaction isopentenyl diphosphate + (2E,6E)-farnesyl diphosphate = (2E,6E,10E)-geranylgeranyl diphosphate + diphosphate. It catalyses the reaction (2E,6E,10E)-geranylgeranyl diphosphate = talarodiene + diphosphate. It participates in secondary metabolite biosynthesis; terpenoid biosynthesis. Functionally, bifunctional type I diterpene synthase; part of the gene cluster that mediates the biosynthesis of talaronoid C, a fusicoccane diterpenoid with an unprecedented tricyclic 5/8/6 ring system. The first step in the pathway is performed by the fusicoccadiene synthase tndC that possesses both prenyl transferase and terpene cyclase activity, converting isopentenyl diphosphate and dimethylallyl diphosphate into geranylgeranyl diphosphate (GGDP) and further converting GGDP into talarodiene, a precursor for talaronoid C. The remaining enzymes from the cluster include the cytochrome P450 monooxygenase tndB, the aldehyde reductase tndE and the alcohol dehydrogenase tndF that are involved in the conversion of talarodiene into talaronoid C. The protein is Bifunctional type I diterpene synthase tndC of Aspergillus flavipes.